Here is a 417-residue protein sequence, read N- to C-terminus: Bifunctional thiamine biosynthesis protein ThiDN (417 aa).

The tract at residues 1–235 (MVILAIGGYD…KSKFGYNSNP (235 aa)) is hydroxymethylpyrimidine/phosphomethylpyrimidine kinase. Q41 is a 4-amino-5-hydroxymethyl-2-methylpyrimidine binding site. Positions 236–417 (TYINKEKVIK…VIQKIYNTLM (182 aa)) are thiamine-phosphate synthase.

It in the N-terminal section; belongs to the ThiD family. This sequence in the C-terminal section; belongs to the ThiN family.

The enzyme catalyses 4-amino-5-hydroxymethyl-2-methylpyrimidine + ATP = 4-amino-2-methyl-5-(phosphooxymethyl)pyrimidine + ADP + H(+). It carries out the reaction 4-amino-2-methyl-5-(phosphooxymethyl)pyrimidine + ATP = 4-amino-2-methyl-5-(diphosphooxymethyl)pyrimidine + ADP. The catalysed reaction is 2-[(2R,5Z)-2-carboxy-4-methylthiazol-5(2H)-ylidene]ethyl phosphate + 4-amino-2-methyl-5-(diphosphooxymethyl)pyrimidine + 2 H(+) = thiamine phosphate + CO2 + diphosphate. It catalyses the reaction 2-(2-carboxy-4-methylthiazol-5-yl)ethyl phosphate + 4-amino-2-methyl-5-(diphosphooxymethyl)pyrimidine + 2 H(+) = thiamine phosphate + CO2 + diphosphate. The enzyme catalyses 4-methyl-5-(2-phosphooxyethyl)-thiazole + 4-amino-2-methyl-5-(diphosphooxymethyl)pyrimidine + H(+) = thiamine phosphate + diphosphate. It functions in the pathway cofactor biosynthesis; thiamine diphosphate biosynthesis; 4-amino-2-methyl-5-diphosphomethylpyrimidine from 5-amino-1-(5-phospho-D-ribosyl)imidazole. It participates in cofactor biosynthesis; thiamine diphosphate biosynthesis; thiamine phosphate from 4-amino-2-methyl-5-diphosphomethylpyrimidine and 4-methyl-5-(2-phosphoethyl)-thiazole: step 1/1. Functionally, catalyzes the phosphorylation of hydroxymethylpyrimidine phosphate (HMP-P) to HMP-PP, and of HMP to HMP-P. In terms of biological role, condenses 4-methyl-5-(beta-hydroxyethyl)thiazole monophosphate (THZ-P) and 4-amino-5-hydroxymethyl pyrimidine pyrophosphate (HMP-PP) to form thiamine monophosphate (TMP). This is Bifunctional thiamine biosynthesis protein ThiDN (thiDN) from Methanocaldococcus jannaschii (strain ATCC 43067 / DSM 2661 / JAL-1 / JCM 10045 / NBRC 100440) (Methanococcus jannaschii).